Consider the following 107-residue polypeptide: Ferredoxin 1 (107 aa).

2 consecutive 4Fe-4S ferredoxin-type domains span residues T2–P30 and N31–E60. [3Fe-4S] cluster is bound by residues C9 and C17. [4Fe-4S] cluster contacts are provided by C21, C40, C43, and C46. A [3Fe-4S] cluster-binding site is contributed by C50.

Requires [4Fe-4S] cluster as cofactor. [3Fe-4S] cluster serves as cofactor.

Ferredoxins are iron-sulfur proteins that transfer electrons in a wide variety of metabolic reactions. This chain is Ferredoxin 1 (fdxA), found in Pseudomonas putida (strain ATCC 47054 / DSM 6125 / CFBP 8728 / NCIMB 11950 / KT2440).